Here is a 189-residue protein sequence, read N- to C-terminus: Nucleoside diphosphate kinase 6 (189 aa).

Positions 19, 68, 96, 102, 116, and 126 each coordinate ATP. His129 (pros-phosphohistidine intermediate) is an active-site residue.

Belongs to the NDK family. Mg(2+) serves as cofactor.

It catalyses the reaction a 2'-deoxyribonucleoside 5'-diphosphate + ATP = a 2'-deoxyribonucleoside 5'-triphosphate + ADP. It carries out the reaction a ribonucleoside 5'-diphosphate + ATP = a ribonucleoside 5'-triphosphate + ADP. Major role in the synthesis of nucleoside triphosphates other than ATP. The ATP gamma phosphate is transferred to the NDP beta phosphate via a ping-pong mechanism, using a phosphorylated active-site intermediate. The chain is Nucleoside diphosphate kinase 6 (Nme6) from Mus musculus (Mouse).